Consider the following 191-residue polypeptide: Protein GrpE (191 aa).

Residues Met1–Thr14 show a composition bias toward polar residues. The tract at residues Met1–Thr35 is disordered. Residues Glu19 to Thr35 show a composition bias toward low complexity.

Belongs to the GrpE family. Homodimer.

It is found in the cytoplasm. Its function is as follows. Participates actively in the response to hyperosmotic and heat shock by preventing the aggregation of stress-denatured proteins, in association with DnaK and GrpE. It is the nucleotide exchange factor for DnaK and may function as a thermosensor. Unfolded proteins bind initially to DnaJ; upon interaction with the DnaJ-bound protein, DnaK hydrolyzes its bound ATP, resulting in the formation of a stable complex. GrpE releases ADP from DnaK; ATP binding to DnaK triggers the release of the substrate protein, thus completing the reaction cycle. Several rounds of ATP-dependent interactions between DnaJ, DnaK and GrpE are required for fully efficient folding. The sequence is that of Protein GrpE from Cupriavidus taiwanensis (strain DSM 17343 / BCRC 17206 / CCUG 44338 / CIP 107171 / LMG 19424 / R1) (Ralstonia taiwanensis (strain LMG 19424)).